The following is a 214-amino-acid chain: Probable transaldolase (214 aa).

The Schiff-base intermediate with substrate role is filled by Lys83.

Belongs to the transaldolase family. Type 3B subfamily.

The protein localises to the cytoplasm. It carries out the reaction D-sedoheptulose 7-phosphate + D-glyceraldehyde 3-phosphate = D-erythrose 4-phosphate + beta-D-fructose 6-phosphate. The protein operates within carbohydrate degradation; pentose phosphate pathway; D-glyceraldehyde 3-phosphate and beta-D-fructose 6-phosphate from D-ribose 5-phosphate and D-xylulose 5-phosphate (non-oxidative stage): step 2/3. Transaldolase is important for the balance of metabolites in the pentose-phosphate pathway. This Dictyoglomus turgidum (strain DSM 6724 / Z-1310) protein is Probable transaldolase.